Here is a 290-residue protein sequence, read N- to C-terminus: Probable porphobilinogen deaminase (290 aa).

At cysteine 230 the chain carries S-(dipyrrolylmethanemethyl)cysteine.

It belongs to the HMBS family. Dipyrromethane serves as cofactor.

It catalyses the reaction 4 porphobilinogen + H2O = hydroxymethylbilane + 4 NH4(+). Its pathway is porphyrin-containing compound metabolism; protoporphyrin-IX biosynthesis; coproporphyrinogen-III from 5-aminolevulinate: step 2/4. Functionally, tetrapolymerization of the monopyrrole PBG into the hydroxymethylbilane pre-uroporphyrinogen in several discrete steps. The sequence is that of Probable porphobilinogen deaminase from Metallosphaera sedula (strain ATCC 51363 / DSM 5348 / JCM 9185 / NBRC 15509 / TH2).